The sequence spans 236 residues: Phosphoribosylaminoimidazole-succinocarboxamide synthase (236 aa).

The protein belongs to the SAICAR synthetase family.

The enzyme catalyses 5-amino-1-(5-phospho-D-ribosyl)imidazole-4-carboxylate + L-aspartate + ATP = (2S)-2-[5-amino-1-(5-phospho-beta-D-ribosyl)imidazole-4-carboxamido]succinate + ADP + phosphate + 2 H(+). It functions in the pathway purine metabolism; IMP biosynthesis via de novo pathway; 5-amino-1-(5-phospho-D-ribosyl)imidazole-4-carboxamide from 5-amino-1-(5-phospho-D-ribosyl)imidazole-4-carboxylate: step 1/2. This Streptococcus equi subsp. zooepidemicus (strain MGCS10565) protein is Phosphoribosylaminoimidazole-succinocarboxamide synthase.